Reading from the N-terminus, the 337-residue chain is Tert-butanol monooxygenase / tert-amyl alcohol desaturase reductase subunit (337 aa).

The FAD-binding FR-type domain maps to 9–114; that stretch reads KYPKTALNLR…GHPRNNFPLI (106 aa). Residues 254–337 form the 2Fe-2S ferredoxin-type domain; the sequence is FQIKIASTGT…SKGATLVLDL (84 aa). The [2Fe-2S] cluster site is built by Cys288, Cys293, Cys296, and Cys324.

This sequence belongs to the PDR/VanB family. This two-component enzyme is composed of an oxygenase (MdpJ) and a reductase (MdpK). [2Fe-2S] cluster serves as cofactor.

In terms of biological role, reductase component of a two-component system involved in the degradation of tertiary alcohols such as tert-butyl alcohol (TBA) and tert-amyl alcohol (TAA). MdpK probably provides electrons via its [2Fe-2S] iron-sulfur cluster to the MdpJ oxygenase subunit. The sequence is that of Tert-butanol monooxygenase / tert-amyl alcohol desaturase reductase subunit from Aquincola tertiaricarbonis.